The following is a 249-amino-acid chain: Deoxyribose-phosphate aldolase (249 aa).

Aspartate 109 functions as the Proton donor/acceptor in the catalytic mechanism. Lysine 171 acts as the Schiff-base intermediate with acetaldehyde in catalysis. Catalysis depends on lysine 200, which acts as the Proton donor/acceptor.

Belongs to the DeoC/FbaB aldolase family. DeoC type 1 subfamily.

Its subcellular location is the cytoplasm. The enzyme catalyses 2-deoxy-D-ribose 5-phosphate = D-glyceraldehyde 3-phosphate + acetaldehyde. Its pathway is carbohydrate degradation; 2-deoxy-D-ribose 1-phosphate degradation; D-glyceraldehyde 3-phosphate and acetaldehyde from 2-deoxy-alpha-D-ribose 1-phosphate: step 2/2. Catalyzes a reversible aldol reaction between acetaldehyde and D-glyceraldehyde 3-phosphate to generate 2-deoxy-D-ribose 5-phosphate. The protein is Deoxyribose-phosphate aldolase of Klebsiella pneumoniae subsp. pneumoniae (strain ATCC 700721 / MGH 78578).